We begin with the raw amino-acid sequence, 199 residues long: Superoxide dismutase [Mn/Fe] (199 aa).

Residues H27, H81, D161, and H165 each contribute to the Fe(3+) site. Mn(2+)-binding residues include H27, H81, D161, and H165.

It belongs to the iron/manganese superoxide dismutase family. Homodimer. Mn(2+) serves as cofactor. Fe(3+) is required as a cofactor.

The enzyme catalyses 2 superoxide + 2 H(+) = H2O2 + O2. In terms of biological role, destroys superoxide anion radicals which are normally produced within the cells and which are toxic to biological systems. Catalyzes the dismutation of superoxide anion radicals into O2 and H2O2 by successive reduction and oxidation of the transition metal ion at the active site. Also contributes to the inhibition of lipid oxidation. Manganese-preferring enzyme, less active with iron than with manganese. The protein is Superoxide dismutase [Mn/Fe] (sodA) of Staphylococcus xylosus.